An 84-amino-acid polypeptide reads, in one-letter code: Putative membrane protein insertion efficiency factor (84 aa).

The protein belongs to the UPF0161 family.

Its subcellular location is the cell inner membrane. Could be involved in insertion of integral membrane proteins into the membrane. This chain is Putative membrane protein insertion efficiency factor, found in Shewanella pealeana (strain ATCC 700345 / ANG-SQ1).